An 852-amino-acid chain; its full sequence is Bifunctional uridylyltransferase/uridylyl-removing enzyme (852 aa).

Positions 1–318 are uridylyltransferase; it reads MPANLSSALE…SAPMRVTLRI (318 aa). The segment at 319 to 672 is uridylyl-removing; the sequence is DDDYIQVNNQ…SRILFKSDSF (354 aa). The HD domain occupies 436–558; that stretch reads VDDHILTVVR…VQTHERLSAL (123 aa). 2 consecutive ACT domains span residues 673-757 and 785-852; these read QVMV…SHSR and SVEI…EQLS.

This sequence belongs to the GlnD family. Requires Mg(2+) as cofactor.

The enzyme catalyses [protein-PII]-L-tyrosine + UTP = [protein-PII]-uridylyl-L-tyrosine + diphosphate. It catalyses the reaction [protein-PII]-uridylyl-L-tyrosine + H2O = [protein-PII]-L-tyrosine + UMP + H(+). With respect to regulation, uridylyltransferase (UTase) activity is inhibited by glutamine, while glutamine activates uridylyl-removing (UR) activity. Modifies, by uridylylation and deuridylylation, the PII regulatory proteins (GlnB and homologs), in response to the nitrogen status of the cell that GlnD senses through the glutamine level. Under low glutamine levels, catalyzes the conversion of the PII proteins and UTP to PII-UMP and PPi, while under higher glutamine levels, GlnD hydrolyzes PII-UMP to PII and UMP (deuridylylation). Thus, controls uridylylation state and activity of the PII proteins, and plays an important role in the regulation of nitrogen assimilation and metabolism. The sequence is that of Bifunctional uridylyltransferase/uridylyl-removing enzyme from Neisseria meningitidis serogroup A / serotype 4A (strain DSM 15465 / Z2491).